A 476-amino-acid chain; its full sequence is Transcription factor EB (476 aa).

Disordered regions lie at residues 1–66 and 107–142; these read MASR…PPVP and HISP…APNS. The interaction with ACSS2 stretch occupies residues 1-167; it reads MASRIGLRMQ…DDVIDNIMRL (167 aa). Residues 26-44 are compositionally biased toward low complexity; sequence QQQAVMHYMQQQQQQQQQQ. Phosphoserine is present on residues S109, S114, S122, and S138. Low complexity predominate over residues 132-142; it reads SSSAGNSAPNS. The short motif at 136-153 is the Nuclear export signal element; sequence GNSAPNSPMAMLHIGSNP. S142 is subject to Phosphoserine; by MTOR. Residues 156–165 form a strong transcription activation domain region; it reads ELDDVIDNIM. T183 is subject to Phosphothreonine. Position 211 is a phosphoserine; by MTOR (S211). C212 is subject to S-(2,3-dicarboxypropyl)cysteine. The bHLH domain maps to 235 to 288; that stretch reads QKKDNHNLIERRRRFNINDRIKELGMLIPKANDLDVRWNKGTILKASVDYIRRM. The short motif at 245-248 is the Nuclear localization signal element; that stretch reads RRRR. The tract at residues 298–319 is leucine-zipper; the sequence is LENHSRRLEMTNKQLWLRIQEL. S332 carries the phosphoserine modification. Positions 349–430 are disordered; it reads ELPSEEGPGE…HGSPFPSLSK (82 aa). Positions 369–390 are enriched in pro residues; sequence PEPLPALPPQAPLPLPTQPPSP. A phosphoserine mark is found at S423, S441, S466, S467, and S469. Residues 447–469 show a composition bias toward low complexity; sequence SDPLLSTMSPEASKASSRRSSFS. A disordered region spans residues 447–476; that stretch reads SDPLLSTMSPEASKASSRRSSFSMEEGDVL.

It belongs to the MiT/TFE family. In terms of assembly, homodimer and heterodimer; with TFE3 or MITF. Interacts (when phosphorylated by MTOR) with YWHAZ; promoting retention in the cytosol. Interacts with IRGM; promoting association between TFEB and PPP3CB and dephosphorylation. Interacts with small GTPases Rag (RagA/RRAGA, RagB/RRAGB, RagC/RRAGC and/or RagD/RRAGD); promoting its recruitment to lysosomal membrane in the presence of nutrients. Interacts with ACSS2. Post-translationally, phosphorylation at Ser-211 by MTOR via non-canonical mTORC1 pathway regulates its subcellular location and activity. When nutrients are present, phosphorylation by MTOR promotes association with 14-3-3/YWHA adapters and retention in the cytosol. Inhibition of mTORC1, starvation and lysosomal disruption, promotes dephosphorylation by calcineurin PPP3CB and translocation to the nucleus. Dephosphorylated by calcineurin PPP3CB in response to lysosomal Ca(2+) release. IRGM promotes dephosphorylation by calcineurin PPP3CB, resulting in TFEB nuclear translocation and stimulation of lysosomal biogenesis. Dephosphorylated by phosphatase PPP3CA following Coxsackievirus B3 infection, leading to nuclear translocation. Exported from the nucleus in a mTORC1-dependent manner in response to nutrient availability. In terms of processing, alkylated via a non-enzymatic covalent modification. Itaconate, an anti-inflammatory metabolite generated in response to lipopolysaccharide, alkylates Cys-212, preventing association with 14-3-3/YWHA adapters, thereby promoting nuclear translocation and activity. Sumoylated; does not affect dimerization with MITF. Post-translationally, (Microbial infection) Cleavage by Coxsackievirus B3 protease 3C after site Gln-60. This non-phosphorylated cleavage product retains its ability to interact with TFEB, TFE3 or MITF and presents impaired transcriptional activity, resulting in disruption of lysosomal functions and increased viral infection.

It is found in the nucleus. It localises to the cytoplasm. Its subcellular location is the cytosol. The protein localises to the lysosome membrane. Inhibited by eltrombopag drug, which binds to the bHLH domain and disrupts DNA-binding. Functionally, transcription factor that acts as a master regulator of lysosomal biogenesis, autophagy, lysosomal exocytosis, lipid catabolism, energy metabolism and immune response. Specifically recognizes and binds E-box sequences (5'-CANNTG-3'); efficient DNA-binding requires dimerization with itself or with another MiT/TFE family member such as TFE3 or MITF. Involved in the cellular response to amino acid availability by acting downstream of MTOR: in the presence of nutrients, TFEB phosphorylation by MTOR promotes its cytosolic retention and subsequent inactivation. Upon starvation or lysosomal stress, inhibition of MTOR induces TFEB dephosphorylation, resulting in nuclear localization and transcription factor activity. Specifically recognizes and binds the CLEAR-box sequence (5'-GTCACGTGAC-3') present in the regulatory region of many lysosomal genes, leading to activate their expression, thereby playing a central role in expression of lysosomal genes. Regulates lysosomal positioning in response to nutrient deprivation by promoting the expression of PIP4P1. Acts as a positive regulator of autophagy by promoting expression of genes involved in autophagy. In association with TFE3, activates the expression of CD40L in T-cells, thereby playing a role in T-cell-dependent antibody responses in activated CD4(+) T-cells and thymus-dependent humoral immunity. Specifically recognizes the gamma-E3 box, a subset of E-boxes, present in the heavy-chain immunoglobulin enhancer. Plays a role in the signal transduction processes required for normal vascularization of the placenta. Involved in the immune response to infection by the bacteria S.aureus, S.typhimurium or S.enterica: infection promotes itaconate production, leading to alkylation, resulting in nuclear localization and transcription factor activity. Itaconate-mediated alkylation activates TFEB-dependent lysosomal biogenesis, facilitating the bacteria clearance during the antibacterial innate immune response. In association with ACSS2, promotes the expression of genes involved in lysosome biogenesis and both autophagy upon glucose deprivation. In Homo sapiens (Human), this protein is Transcription factor EB.